The following is a 141-amino-acid chain: Large ribosomal subunit protein uL11 (141 aa).

Belongs to the universal ribosomal protein uL11 family. In terms of assembly, part of the ribosomal stalk of the 50S ribosomal subunit. Interacts with L10 and the large rRNA to form the base of the stalk. L10 forms an elongated spine to which L12 dimers bind in a sequential fashion forming a multimeric L10(L12)X complex. Post-translationally, one or more lysine residues are methylated.

Functionally, forms part of the ribosomal stalk which helps the ribosome interact with GTP-bound translation factors. The polypeptide is Large ribosomal subunit protein uL11 (Chloroflexus aurantiacus (strain ATCC 29366 / DSM 635 / J-10-fl)).